The chain runs to 199 residues: Desiccation stress protein DSP-22, chloroplastic (199 aa).

The N-terminal 52 residues, 1–52 (MASSTCYATIPAMSCRGQSTITRFGPNNLFLGKQSYELPLMRRNAKFTVRSM), are a transit peptide targeting the chloroplast. A compositionally biased stretch (basic and acidic residues) spans 53–62 (REDNEKEEQQ). The disordered stretch occupies residues 53 to 82 (REDNEKEEQQQQKQQQTHDGGPDLTPNRTE). 2 helical membrane passes run 130–152 (FNGG…LIPI) and 172–191 (IWNG…TEYV).

Belongs to the ELIP/psbS family. In terms of tissue distribution, preferentially localized in the chloroplast-rich palisade parenchyma cells, in extracts of desiccated leaves, in seeds, but not in roots or untreated leaves.

It is found in the plastid. It localises to the chloroplast thylakoid membrane. Possibly exerts a protective role during water loss. This chain is Desiccation stress protein DSP-22, chloroplastic (DSP-22), found in Craterostigma plantagineum (Blue gem).